We begin with the raw amino-acid sequence, 687 residues long: DNA ligase (687 aa).

NAD(+) contacts are provided by residues 34 to 38 (DAEYD), 83 to 84 (SL), and Glu117. Residue Lys119 is the N6-AMP-lysine intermediate of the active site. 4 residues coordinate NAD(+): Arg140, Glu182, Lys298, and Lys322. Residues Cys416, Cys419, Cys434, and Cys439 each coordinate Zn(2+). Residues 609–687 (EARGPFAGKT…EEEFVRLLKE (79 aa)) enclose the BRCT domain.

It belongs to the NAD-dependent DNA ligase family. LigA subfamily. Requires Mg(2+) as cofactor. Mn(2+) is required as a cofactor.

It carries out the reaction NAD(+) + (deoxyribonucleotide)n-3'-hydroxyl + 5'-phospho-(deoxyribonucleotide)m = (deoxyribonucleotide)n+m + AMP + beta-nicotinamide D-nucleotide.. DNA ligase that catalyzes the formation of phosphodiester linkages between 5'-phosphoryl and 3'-hydroxyl groups in double-stranded DNA using NAD as a coenzyme and as the energy source for the reaction. It is essential for DNA replication and repair of damaged DNA. This chain is DNA ligase, found in Anaeromyxobacter dehalogenans (strain 2CP-1 / ATCC BAA-258).